The following is a 234-amino-acid chain: Phosphoglycolate phosphatase (234 aa).

D13 acts as the Nucleophile in catalysis. Residues D13, D15, and D175 each contribute to the Mg(2+) site.

Belongs to the HAD-like hydrolase superfamily. CbbY/CbbZ/Gph/YieH family. Monomer. Mg(2+) serves as cofactor. Requires chloride as cofactor.

It catalyses the reaction 2-phosphoglycolate + H2O = glycolate + phosphate. It participates in organic acid metabolism; glycolate biosynthesis; glycolate from 2-phosphoglycolate: step 1/1. Specifically catalyzes the dephosphorylation of 2-phosphoglycolate. Is involved in the dissimilation of the intracellular 2-phosphoglycolate formed during the DNA repair of 3'-phosphoglycolate ends, a major class of DNA lesions induced by oxidative stress. The chain is Phosphoglycolate phosphatase from Pectobacterium atrosepticum (strain SCRI 1043 / ATCC BAA-672) (Erwinia carotovora subsp. atroseptica).